The following is a 264-amino-acid chain: Ribosomal RNA small subunit methyltransferase A (264 aa).

Residues N12, L14, G39, E60, D83, and N103 each coordinate S-adenosyl-L-methionine.

Belongs to the class I-like SAM-binding methyltransferase superfamily. rRNA adenine N(6)-methyltransferase family. RsmA subfamily.

The protein resides in the cytoplasm. The catalysed reaction is adenosine(1518)/adenosine(1519) in 16S rRNA + 4 S-adenosyl-L-methionine = N(6)-dimethyladenosine(1518)/N(6)-dimethyladenosine(1519) in 16S rRNA + 4 S-adenosyl-L-homocysteine + 4 H(+). Functionally, specifically dimethylates two adjacent adenosines (A1518 and A1519) in the loop of a conserved hairpin near the 3'-end of 16S rRNA in the 30S particle. May play a critical role in biogenesis of 30S subunits. The chain is Ribosomal RNA small subunit methyltransferase A from Syntrophotalea carbinolica (strain DSM 2380 / NBRC 103641 / GraBd1) (Pelobacter carbinolicus).